The following is a 446-amino-acid chain: Homocitrate synthase, mitochondrial (446 aa).

Positions 1-14 (MCATDNAPAANAAP) are enriched in low complexity. Residues 1–36 (MCATDNAPAANAAPEKPSNVGVEVGHTGEQTNPYGA) are disordered. Positions 48–307 (FQLIESTLRE…HKLRDLENLV (260 aa)) constitute a Pyruvate carboxyltransferase domain. Arginine 56 is a 2-oxoglutarate binding site. Glutamate 57 lines the Mg(2+) pocket. 3 residues coordinate 2-oxoglutarate: histidine 116, arginine 176, and threonine 210. 2 residues coordinate Mg(2+): histidine 237 and histidine 239. Histidine 334 functions as the Proton acceptor in the catalytic mechanism. The interval 422 to 446 (TPTVAATEGPAVEDEPAAKKAKTEE) is disordered. Over residues 437 to 446 (PAAKKAKTEE) the composition is skewed to basic and acidic residues.

Belongs to the alpha-IPM synthase/homocitrate synthase family. Homocitrate synthase LYS20/LYS21 subfamily. Mg(2+) serves as cofactor. The cofactor is Mn(2+).

Its subcellular location is the mitochondrion. It catalyses the reaction acetyl-CoA + 2-oxoglutarate + H2O = (2R)-homocitrate + CoA + H(+). It functions in the pathway amino-acid biosynthesis; L-lysine biosynthesis via AAA pathway; L-alpha-aminoadipate from 2-oxoglutarate: step 1/5. Catalyzes the aldol-type condensation of 2-oxoglutarate with acetyl-CoA to yield homocitrate. Carries out the first step of the alpha-aminoadipate (AAA) lysine biosynthesis pathway. The protein is Homocitrate synthase, mitochondrial (LYS1) of Yarrowia lipolytica (strain CLIB 122 / E 150) (Yeast).